The following is a 760-amino-acid chain: Acetyl-CoA decarbonylase/synthase complex subunit alpha 1 (760 aa).

Cys-56, Cys-59, Cys-60, Cys-62, Cys-67, and Cys-77 together coordinate [4Fe-4S] cluster. Residue His-100 coordinates CO. [Ni-4Fe-4S] cluster contacts are provided by His-231, Cys-259, and Cys-298. 4Fe-4S ferredoxin-type domains lie at 381–410 (KKLQ…VEAM) and 418–450 (FEGL…MIED). [4Fe-4S] cluster-binding residues include Cys-390, Cys-393, Cys-396, Cys-400, Cys-428, Cys-431, Cys-434, and Cys-438. Residues Cys-496, Cys-525, and Cys-560 each contribute to the [Ni-4Fe-4S] cluster site.

Belongs to the Ni-containing carbon monoxide dehydrogenase family. As to quaternary structure, heterotetramer of two alpha and two epsilon subunits. The ACDS complex is made up of alpha, epsilon, beta, gamma and delta subunits with a probable stoichiometry of (alpha(2)epsilon(2))(4)-beta(8)-(gamma(1)delta(1))(8). It depends on [4Fe-4S] cluster as a cofactor. Requires [Ni-4Fe-4S] cluster as cofactor.

The enzyme catalyses CO + 2 oxidized [2Fe-2S]-[ferredoxin] + H2O = 2 reduced [2Fe-2S]-[ferredoxin] + CO2 + 2 H(+). Its function is as follows. Part of the ACDS complex that catalyzes the reversible cleavage of acetyl-CoA, allowing autotrophic growth from CO(2). The alpha-epsilon subcomponent functions as a carbon monoxide dehydrogenase. This is Acetyl-CoA decarbonylase/synthase complex subunit alpha 1 from Methanopyrus kandleri (strain AV19 / DSM 6324 / JCM 9639 / NBRC 100938).